The chain runs to 544 residues: Chaperonin GroEL (544 aa).

Residues 30 to 33 (TLGP), lysine 51, 87 to 91 (DGTTT), glycine 415, and aspartate 495 each bind ATP.

Belongs to the chaperonin (HSP60) family. Forms a cylinder of 14 subunits composed of two heptameric rings stacked back-to-back. Interacts with the co-chaperonin GroES.

It is found in the cytoplasm. The catalysed reaction is ATP + H2O + a folded polypeptide = ADP + phosphate + an unfolded polypeptide.. Its function is as follows. Together with its co-chaperonin GroES, plays an essential role in assisting protein folding. The GroEL-GroES system forms a nano-cage that allows encapsulation of the non-native substrate proteins and provides a physical environment optimized to promote and accelerate protein folding. This Bartonella bacilliformis (strain ATCC 35685 / KC583 / Herrer 020/F12,63) protein is Chaperonin GroEL.